The primary structure comprises 494 residues: Ribonuclease H (494 aa).

Disordered stretches follow at residues 79–148 (NRRR…APPP) and 205–231 (RSGL…VGLR). Composition is skewed to polar residues over residues 84-100 (GSTS…NQLA) and 131-143 (PTTS…TRTS). The RNase H type-1 domain occupies 272–488 (SSVPQVVYVD…ADVLAVAGAR (217 aa)). Mg(2+) is bound by residues D281, E325, D374, and D480.

This sequence belongs to the RNase H family. In terms of assembly, monomer. Requires Mg(2+) as cofactor.

It catalyses the reaction Endonucleolytic cleavage to 5'-phosphomonoester.. Its function is as follows. Endonuclease that specifically degrades the RNA of RNA-DNA hybrids. The sequence is that of Ribonuclease H (RNH1) from Crithidia fasciculata.